The chain runs to 93 residues: Parbolysin P3 (93 aa).

3 disulfides stabilise this stretch: cysteine 16/cysteine 37, cysteine 22/cysteine 33, and cysteine 47/cysteine 60.

Belongs to the worm cytolysin family. As to expression, localized within the skin and proboscis and are most readily isolated from body mucus secretions.

It localises to the secreted. Cytolysin that shows hemolytic activity (on bovine erythrocytes, HC(50)=5.75 mg/ml). This hemolytic activity is completely inhibited by small unilamelar vesicles composed of PC/PG, PC/PI and PC/PS in 1:1 molar ratios (with at least 100 mg/ml concentration). The sequence is that of Parbolysin P3 from Parborlasia corrugatus (Antarctic nemertean worm).